A 209-amino-acid chain; its full sequence is Orotate phosphoribosyltransferase (209 aa).

5-phospho-alpha-D-ribose 1-diphosphate is bound by residues Arg96, Lys100, His102, and 122-130 (EDLISTGGS). Ser126 contacts orotate.

Belongs to the purine/pyrimidine phosphoribosyltransferase family. PyrE subfamily. As to quaternary structure, homodimer. It depends on Mg(2+) as a cofactor.

It carries out the reaction orotidine 5'-phosphate + diphosphate = orotate + 5-phospho-alpha-D-ribose 1-diphosphate. The protein operates within pyrimidine metabolism; UMP biosynthesis via de novo pathway; UMP from orotate: step 1/2. Its function is as follows. Catalyzes the transfer of a ribosyl phosphate group from 5-phosphoribose 1-diphosphate to orotate, leading to the formation of orotidine monophosphate (OMP). The chain is Orotate phosphoribosyltransferase from Streptococcus pyogenes serotype M1.